Consider the following 197-residue polypeptide: Imidazoleglycerol-phosphate dehydratase (197 aa).

This sequence belongs to the imidazoleglycerol-phosphate dehydratase family.

The protein resides in the cytoplasm. The enzyme catalyses D-erythro-1-(imidazol-4-yl)glycerol 3-phosphate = 3-(imidazol-4-yl)-2-oxopropyl phosphate + H2O. It participates in amino-acid biosynthesis; L-histidine biosynthesis; L-histidine from 5-phospho-alpha-D-ribose 1-diphosphate: step 6/9. The chain is Imidazoleglycerol-phosphate dehydratase from Pseudomonas aeruginosa (strain LESB58).